A 317-amino-acid polypeptide reads, in one-letter code: Aspartate carbamoyltransferase catalytic subunit (317 aa).

Carbamoyl phosphate-binding residues include R65 and T66. Position 93 (K93) interacts with L-aspartate. Carbamoyl phosphate is bound by residues R115, H145, and Q148. The L-aspartate site is built by R178 and R233. Positions 274 and 275 each coordinate carbamoyl phosphate.

The protein belongs to the aspartate/ornithine carbamoyltransferase superfamily. ATCase family. Heterododecamer (2C3:3R2) of six catalytic PyrB chains organized as two trimers (C3), and six regulatory PyrI chains organized as three dimers (R2).

It carries out the reaction carbamoyl phosphate + L-aspartate = N-carbamoyl-L-aspartate + phosphate + H(+). Its pathway is pyrimidine metabolism; UMP biosynthesis via de novo pathway; (S)-dihydroorotate from bicarbonate: step 2/3. Catalyzes the condensation of carbamoyl phosphate and aspartate to form carbamoyl aspartate and inorganic phosphate, the committed step in the de novo pyrimidine nucleotide biosynthesis pathway. This chain is Aspartate carbamoyltransferase catalytic subunit, found in Methylobacillus flagellatus (strain ATCC 51484 / DSM 6875 / VKM B-1610 / KT).